Consider the following 193-residue polypeptide: NADH-quinone oxidoreductase subunit B (193 aa).

Positions 72, 73, 137, and 167 each coordinate [4Fe-4S] cluster.

Belongs to the complex I 20 kDa subunit family. As to quaternary structure, NDH-1 is composed of 14 different subunits. Subunits NuoB, C, D, E, F, and G constitute the peripheral sector of the complex. The cofactor is [4Fe-4S] cluster.

It localises to the cell inner membrane. It catalyses the reaction a quinone + NADH + 5 H(+)(in) = a quinol + NAD(+) + 4 H(+)(out). NDH-1 shuttles electrons from NADH, via FMN and iron-sulfur (Fe-S) centers, to quinones in the respiratory chain. Couples the redox reaction to proton translocation (for every two electrons transferred, four hydrogen ions are translocated across the cytoplasmic membrane), and thus conserves the redox energy in a proton gradient. The sequence is that of NADH-quinone oxidoreductase subunit B from Brucella abortus (strain S19).